Here is a 706-residue protein sequence, read N- to C-terminus: Amino-acid acetyltransferase, mitochondrial (706 aa).

2 disordered regions span residues 1-25 and 367-403; these read MSSR…GAGD and NPAN…PAKQ. Residues 1–35 constitute a mitochondrion transit peptide; sequence MSSRVLASRAAQPLKRHPTVVGAGDEAYPTPRRCF. A compositionally biased stretch (polar residues) spans 367–388; that stretch reads NPANNSQGESVVTNPISDSNAV. Over residues 389-401 the composition is skewed to low complexity; the sequence is SESASTEPTSTPA. Residues 527-696 form the N-acetyltransferase domain; the sequence is TRPNMNLDDP…YEAVCRSIQP (170 aa).

It belongs to the acetyltransferase family.

It localises to the mitochondrion. The catalysed reaction is L-glutamate + acetyl-CoA = N-acetyl-L-glutamate + CoA + H(+). Its pathway is amino-acid biosynthesis; L-arginine biosynthesis; N(2)-acetyl-L-ornithine from L-glutamate: step 1/4. In terms of biological role, N-acetylglutamate synthase involved in arginine biosynthesis. The polypeptide is Amino-acid acetyltransferase, mitochondrial (arg2) (Emericella nidulans (strain FGSC A4 / ATCC 38163 / CBS 112.46 / NRRL 194 / M139) (Aspergillus nidulans)).